The following is a 110-amino-acid chain: Putative caspase recruitment domain-containing protein 17P (110 aa).

Residues 1-91 form the CARD domain; that stretch reads MADKVLKEKR…HLAGTLGLSA (91 aa).

In terms of assembly, interacts with pro-CASP1. Ubiquitous.

It localises to the cytoplasm. Its function is as follows. Regulator of procaspase-1/CASP1 activation implicated in the regulation of the proteolytic maturation of pro-IL-1beta/IL1B and its release during inflammation. Inhibits the release of IL1B in response to LPS in monocytes. However, unlike CASP1, do not induce NF-kappa-B activation. In Homo sapiens (Human), this protein is Putative caspase recruitment domain-containing protein 17P (CARD17P).